The following is a 2611-amino-acid chain: Highly reducing polyketide synthase ATEG_07659 (2611 aa).

The region spanning 10–409 (SEPIAIIGLS…GTNSHVIVEG (400 aa)) is the Ketosynthase family 3 (KS3) domain. Catalysis depends on for beta-ketoacyl synthase activity residues cysteine 157, histidine 292, and histidine 330. A malonyl-CoA:ACP transacylase (MAT) domain region spans residues 537–844 (MVFTGQGAQW…VRFVEAFTDM (308 aa)). The tract at residues 969–1109 (HDLLGVLVPG…GLITVQMAAD (141 aa)) is N-terminal hotdog fold. In terms of domain architecture, PKS/mFAS DH spans 969-1292 (HDLLGVLVPG…CQSLGRSAPG (324 aa)). Positions 970-1289 (DLLGVLVPGT…GLVCQSLGRS (320 aa)) are dehydratase (DH) domain. The active-site Proton acceptor; for dehydratase activity is the histidine 1001. The segment at 1128 to 1292 (GYTRRIDPQD…CQSLGRSAPG (165 aa)) is C-terminal hotdog fold. Residue aspartate 1199 is the Proton donor; for dehydratase activity of the active site. The methyltransferase (CMet) domain stretch occupies residues 1469-1602 (FGQLKSLLAA…GATLLLMETT (134 aa)). Positions 1898 to 2213 (GLLDTLAFGD…TGKHLGKLVL (316 aa)) are enoyl reductase (ER) domain. Positions 2236 to 2416 (ASYLLVGGVG…AVSLDMGVIK (181 aa)) are ketoreductase (KR) domain. The segment covering 2499 to 2509 (SRAQAQQAGGD) has biased composition (low complexity). The disordered stretch occupies residues 2499–2520 (SRAQAQQAGGDSDSEPLSAKLR). One can recognise a Carrier domain in the interval 2527–2604 (AAARCVGDAI…ALALDVVAKS (78 aa)). At serine 2564 the chain carries O-(pantetheine 4'-phosphoryl)serine.

It functions in the pathway secondary metabolite biosynthesis. Highly reducing polyketide synthase; part of the cluster B that mediates the biosynthesis of azasperpyranones, members of the azaphilone family that exhibit anti-cancer activities. Azasperpyranones are synthesized by 2 clusters, A and B. Cluster A is responsible for the production of the polyhydric phenol moiety while the azaphilonoid scaffold is produced by the cluster B. The non-reducing polyketide synthase ATEG_03629 produces 5-methyl orsellinic acid, which is then reduced to 5-methyl orsellinic aldehyde by the NRPS-like protein ATEG_03630. 5-methyl orsellinic aldehyde is then first hydroxylated by the FAD-dependent monooxygenase ATEG_03635 and subsequently hydroxylated by the cytochrome P450 monooxygenase ATEG_03631 to produce the unstable polyhydric phenol precursor of azasperpyranones. On the other hand, the polyketide synthase ATEG_07659 is responsible for producing the 3,5-dimethyloctadienone moiety from acetyl-CoA, three malonyl-CoA, and two S-adenosyl methionines (SAM). The 3,5-dimethyloctadienone moiety is then loaded onto the SAT domain of ATEG_07661 and extended with four malonyl-CoA and one SAM, which leads to the formation of 2,4-dihydroxy-6-(5,7-dimethyl-2-oxo-trans-3-trans-5-nonadienyl)-3-methylbenzaldehyde (compound 8) after reductive release and aldol condensation. The FAD-dependent monooxygenase ATEG_07662 is the next enzyme in the biosynthesis sequence and hydroxylates the side chain at the benzylic position of compound 8. In Aspergillus nidulans, afoF, the ortholog of the FAD-dependent oxygenase ATEG_07660, is the key enzyme for the biosynthesis of asperfuranone by catalyzing the hydroxylation at C-8 of to prevent the formation of a six-membered ring hemiacetal intermediate and thus facilitating the formation of a five-membered ring to produce asperfuranone. In Aspergillus terreus, ATEG_07660 is probably not functional, which leads to the formation of the six-membered ring hemiacetal intermediate presperpyranone instead of asperfuranone. Finally, ATEG_03636 is involved in the condensation of the polyhydric phenol moiety produced by cluster A and the perasperpyranone precursor produced by cluster B, to yield azasperpyranone A. Further modifications of azasperpyranone A result in the production of derivatives, including azasperpyranone B to F. The polypeptide is Highly reducing polyketide synthase ATEG_07659 (Aspergillus terreus (strain NIH 2624 / FGSC A1156)).